The chain runs to 99 residues: Large ribosomal subunit protein uL23 (99 aa).

This sequence belongs to the universal ribosomal protein uL23 family. In terms of assembly, part of the 50S ribosomal subunit. Contacts protein L29, and trigger factor when it is bound to the ribosome.

One of the early assembly proteins it binds 23S rRNA. One of the proteins that surrounds the polypeptide exit tunnel on the outside of the ribosome. Forms the main docking site for trigger factor binding to the ribosome. The sequence is that of Large ribosomal subunit protein uL23 from Xanthomonas campestris pv. campestris (strain B100).